We begin with the raw amino-acid sequence, 828 residues long: Periplasmic nitrate reductase (828 aa).

Positions 1 to 31 (MKLSRRSFMKANAVAAAAAAAGLSVPGVARA) form a signal peptide, tat-type signal. In terms of domain architecture, 4Fe-4S Mo/W bis-MGD-type spans 39–95 (IKWDKAPCRFCGTGCGVLVGTQQGRVVACQGDPDAPVNRGLNCIKGYFLPKIMYGKD). Cys46, Cys49, Cys53, and Cys81 together coordinate [4Fe-4S] cluster. Mo-bis(molybdopterin guanine dinucleotide) is bound by residues Lys83, Gln150, Asn175, Cys179, 212 to 219 (WGANMAEM), 243 to 247 (STYQH), 262 to 264 (QSD), Met372, Gln376, Asn482, 508 to 509 (SD), Lys531, Asp558, and 718 to 727 (TGRVLEHWHT). Phe794 is a substrate binding site. Mo-bis(molybdopterin guanine dinucleotide) is bound by residues Asn802 and Lys819.

Belongs to the prokaryotic molybdopterin-containing oxidoreductase family. NasA/NapA/NarB subfamily. Component of the periplasmic nitrate reductase NapAB complex composed of NapA and NapB. The cofactor is [4Fe-4S] cluster. Mo-bis(molybdopterin guanine dinucleotide) is required as a cofactor. In terms of processing, predicted to be exported by the Tat system. The position of the signal peptide cleavage has not been experimentally proven.

It is found in the periplasm. The catalysed reaction is 2 Fe(II)-[cytochrome] + nitrate + 2 H(+) = 2 Fe(III)-[cytochrome] + nitrite + H2O. Catalytic subunit of the periplasmic nitrate reductase complex NapAB. Receives electrons from NapB and catalyzes the reduction of nitrate to nitrite. The chain is Periplasmic nitrate reductase from Shigella flexneri.